The chain runs to 604 residues: Proline--tRNA ligase (604 aa).

It belongs to the class-II aminoacyl-tRNA synthetase family. ProS type 1 subfamily. Homodimer.

It localises to the cytoplasm. It carries out the reaction tRNA(Pro) + L-proline + ATP = L-prolyl-tRNA(Pro) + AMP + diphosphate. Catalyzes the attachment of proline to tRNA(Pro) in a two-step reaction: proline is first activated by ATP to form Pro-AMP and then transferred to the acceptor end of tRNA(Pro). As ProRS can inadvertently accommodate and process non-cognate amino acids such as alanine and cysteine, to avoid such errors it has two additional distinct editing activities against alanine. One activity is designated as 'pretransfer' editing and involves the tRNA(Pro)-independent hydrolysis of activated Ala-AMP. The other activity is designated 'posttransfer' editing and involves deacylation of mischarged Ala-tRNA(Pro). The misacylated Cys-tRNA(Pro) is not edited by ProRS. The chain is Proline--tRNA ligase from Nostoc punctiforme (strain ATCC 29133 / PCC 73102).